Consider the following 201-residue polypeptide: L(+)-tartrate dehydratase subunit beta (201 aa).

Histidine 37 is a catalytic residue.

This sequence belongs to the class-I fumarase family. In terms of assembly, heterotetramer of two alpha and two beta subunits.

The enzyme catalyses (2R,3R)-tartrate = oxaloacetate + H2O. This Shigella sonnei (strain Ss046) protein is L(+)-tartrate dehydratase subunit beta (ttdB).